The sequence spans 325 residues: Heat-inducible transcription repressor HrcA (325 aa).

It belongs to the HrcA family.

Functionally, negative regulator of class I heat shock genes (grpE-dnaK-dnaJ and groELS operons). Prevents heat-shock induction of these operons. The chain is Heat-inducible transcription repressor HrcA from Staphylococcus aureus (strain MRSA252).